We begin with the raw amino-acid sequence, 384 residues long: Glucans biosynthesis protein C (384 aa).

A run of 10 helical transmembrane segments spans residues alanine 17 to tryptophan 37, phenylalanine 54 to leucine 74, valine 91 to glutamine 111, leucine 140 to phenylalanine 160, alanine 173 to isoleucine 193, phenylalanine 212 to isoleucine 232, phenylalanine 240 to leucine 260, threonine 274 to glycine 294, alanine 311 to threonine 331, and leucine 338 to isoleucine 358.

Belongs to the acyltransferase 3 family. OpgC subfamily.

It localises to the cell membrane. It functions in the pathway glycan metabolism; osmoregulated periplasmic glucan (OPG) biosynthesis. Necessary for the succinyl substitution of periplasmic glucans. Could catalyze the transfer of succinyl residues from the cytoplasmic side of the membrane to the nascent glucan backbones on the periplasmic side of the membrane. In Salmonella typhi, this protein is Glucans biosynthesis protein C.